The chain runs to 1403 residues: DNA-directed RNA polymerase subunit beta' (1403 aa).

Zn(2+) is bound by residues C69, C71, C84, and C87. The Mg(2+) site is built by D461, D463, and D465. Residues C818, C891, C898, and C901 each contribute to the Zn(2+) site. Residues 1384-1403 (LELLRNEGEDETGNEELVAE) form a disordered region. The span at 1391–1403 (GEDETGNEELVAE) shows a compositional bias: acidic residues.

It belongs to the RNA polymerase beta' chain family. The RNAP catalytic core consists of 2 alpha, 1 beta, 1 beta' and 1 omega subunit. When a sigma factor is associated with the core the holoenzyme is formed, which can initiate transcription. Mg(2+) is required as a cofactor. It depends on Zn(2+) as a cofactor.

The catalysed reaction is RNA(n) + a ribonucleoside 5'-triphosphate = RNA(n+1) + diphosphate. DNA-dependent RNA polymerase catalyzes the transcription of DNA into RNA using the four ribonucleoside triphosphates as substrates. In Koribacter versatilis (strain Ellin345), this protein is DNA-directed RNA polymerase subunit beta'.